We begin with the raw amino-acid sequence, 2377 residues long: Serine/threonine-protein kinase WNK1 (2377 aa).

Disordered regions lie at residues 1-79 (MSDG…RFFR) and 93-203 (LPGL…QQDD). Phosphothreonine is present on residues Thr-17 and Thr-58. Basic and acidic residues predominate over residues 48-64 (RTEEYRRRRHTMDKDSR). Composition is skewed to low complexity over residues 101-111 (PQPSVPAVVPQ) and 127-141 (VASQ…AASP). Polar residues predominate over residues 149–158 (SATTTVPSST). Phosphoserine occurs at positions 165 and 172. The Protein kinase domain maps to 221–479 (LKFDIEIGRG…IKDLLNHAFF (259 aa)). Ser-231 is a binding site for ATP. 2 residues coordinate chloride: Phe-283 and Leu-299. Residues 301-304 (TELM) and Lys-351 each bind ATP. Asp-368 serves as the catalytic Proton acceptor. Chloride contacts are provided by Leu-369 and Leu-371. A phosphoserine; by autocatalysis mark is found at Ser-378 and Ser-382. The tract at residues 488 to 555 (ELAEEDDGEK…VCEGDHKTMA (68 aa)) is autoinhibitory domain. Positions 573 to 588 (QLVREEQEKRKQEESS) are enriched in basic and acidic residues. Disordered stretches follow at residues 573-782 (QLVR…SAGT) and 1013-1114 (PAVS…SRPK). Polar residues-rich tracts occupy residues 593–628 (NEQQ…STQV), 638–705 (HQQL…QSQP), and 713–733 (SMAQ…VLSS). An interaction with KLHL3 region spans residues 629–639 (EPEEPEADQHQ). Over residues 734–746 (QPIQHPQQQGIQP) the composition is skewed to low complexity. The span at 747-782 (TVPSQQAVQYSLPQAASSSEGTTAQPVSQPQVSAGT) shows a compositional bias: polar residues. The segment covering 1018-1028 (TQQPPTTSSQQ) has biased composition (low complexity). Positions 1029–1038 (AVLESTQGVS) are enriched in polar residues. The span at 1042–1058 (PPEQTPITQSQPTQPVP) shows a compositional bias: low complexity. Polar residues predominate over residues 1075-1085 (SDGNENAPSSS). Residues 1093–1114 (TKRHYRKSVRSRSRHEKTSRPK) show a composition bias toward basic residues. The short motif at 1252-1255 (RFIV) is the RFXV motif 1 element. Phosphoserine is present on Ser-1256. Disordered regions lie at residues 1726 to 1760 (GQVS…TVVP) and 1818 to 1847 (TMSS…SSGA). Over residues 1738 to 1748 (PVGTATGVKPG) the composition is skewed to low complexity. Phosphothreonine is present on Thr-1843. The short motif at 1854-1857 (RFQV) is the RFXV motif 2 element. The segment at 1860–1945 (TMDDAQKERK…TKVGRFQVTT (86 aa)) is disordered. A compositionally biased stretch (basic and acidic residues) spans 1863 to 1879 (DAQKERKNRSEDTKSVH). Residues 1882-1900 (SSTSESSVLSSSSPESTLV) are compositionally biased toward low complexity. Short sequence motifs (RFXV motif) lie at residues 1940 to 1943 (RFQV) and 1952 to 1955 (RFSV). Residues 1959–1969 (EDKVTELKKEG) show a composition bias toward basic and acidic residues. Disordered regions lie at residues 1959 to 1984 (EDKV…QTVI), 1989 to 2008 (PKKE…PSSD), 2015 to 2064 (SRGT…DIED), 2107 to 2191 (VIIP…NLYS), and 2203 to 2239 (SLSA…SRKG). Ser-1973 is subject to Phosphoserine. The span at 1989–1998 (PKKEKPELAE) shows a compositional bias: basic and acidic residues. Phosphoserine is present on residues Ser-2006, Ser-2007, Ser-2022, Ser-2024, and Ser-2027. Residues 2035–2057 (SLPVQNLSQSLSNSFNSSYMSSD) show a composition bias toward low complexity. At Ser-2116 the chain carries Phosphoserine. Positions 2117 to 2129 (GRRRRPTKSKGSK) are enriched in basic residues. Residues 2130–2140 (SSRSSSLGNKS) show a composition bias toward low complexity. Residues 2141–2191 (PQLSGNLSGQSGTSVLHPQQTLHPAGNTPETGHNQLLQPLKPSPSSDNLYS) show a composition bias toward polar residues. Low complexity predominate over residues 2208–2232 (GQGTSSTNTVGGTVSSQAAQAQPPA). The interval 2236–2256 (SRKGTFTDDLHKLVDNWARDA) is amphipathic alpha-helix. Residues Ser-2265 and Ser-2281 each carry the phosphoserine modification. Residues 2325–2344 (PAPFGTQWSGTGGPAPQPLG) are disordered. 2 positions are modified to phosphoserine: Ser-2365 and Ser-2367.

Belongs to the protein kinase superfamily. Ser/Thr protein kinase family. WNK subfamily. As to quaternary structure, interacts with WNK3. Interacts with WNK4; inhibiting the activity of WNK4. Interacts with SGK1; promoting its activation. Associates with the mTORC2 complex. Interacts with UVRAG. Interacts with isoform 1; inhibiting isoform 1 activity. Mg(2+) serves as cofactor. Autophosphorylated at Ser-378 and Ser-382, promoting its activity. Autophosphorylation at Ser-382 is inhibited by intracellular calcium. Phosphorylation at Thr-58 increases ability to activate SGK1. Post-translationally, ubiquitinated by the BCR(KLHL3) complex, leading to its degradation. Also ubiquitinated by the BCR(KLHL2) complex. In terms of processing, may be O-glycosylated. In terms of tissue distribution, widely expressed in both adult and embryonic tissue, with highest levels observed in the testis and lower levels in heart, lung, kidney, placenta, brain and skeletal muscle. Expressed in pancreatic duct. Two isoforms are expressed in heart, a single shorter isoform in the kidney. Locates to the distal convoluted tubule, the medullary collecting duct and the cortical collecting duct of the kidney. Restricted to the nervous system, expressed preferentially in sensory neurons than in motor neurons and in general more abundant in axons than in cell bodies (at protein level). In the DRG, predominantly expressed in the satellite cells that envelop sensory neurons, but low expression also observed in the cell bodies of neurons (at protein level). In the sciatic nerve, expressed in the Schwann cells that surround axons and in a mosaic distribution of axons (at protein level). In the spinal cord, expressed in superficial layers (LI and LII), as well as in the fibers of the Lissauer tract (at protein level). Also detected in the axon fibers of dorsolateral funiculus and lateral funiculus (at protein level).

It localises to the cytoplasm. The protein localises to the nucleus. The protein resides in the cytoskeleton. Its subcellular location is the spindle. The enzyme catalyses L-seryl-[protein] + ATP = O-phospho-L-seryl-[protein] + ADP + H(+). It catalyses the reaction L-threonyl-[protein] + ATP = O-phospho-L-threonyl-[protein] + ADP + H(+). Activated in response to hyperosmotic stress: cell shrinkage promotes formation of a membraneless compartment that concentrates WNK1 with its substrates, OXSR1/OSR1 and STK39/SPAK. Activation requires autophosphorylation of Ser-382 and, to a lower extent, Ser-378. Autophosphorylation and subsequent activation is inhibited by increases in intracellular ionic strength: Cl(-) potently inhibits WNK1 kinase activity via direct binding. Also inhibited by K(+) ions. Functionally, serine/threonine-protein kinase component of the WNK1-SPAK/OSR1 kinase cascade, which acts as a key regulator of blood pressure and regulatory volume increase by promoting ion influx. WNK1 mediates regulatory volume increase in response to hyperosmotic stress by acting as a molecular crowding sensor, which senses cell shrinkage and mediates formation of a membraneless compartment by undergoing liquid-liquid phase separation. The membraneless compartment concentrates WNK1 with its substrates, OXSR1/OSR1 and STK39/SPAK, promoting WNK1-dependent phosphorylation and activation of downstream kinases OXSR1/OSR1 and STK39/SPAK. Following activation, OXSR1/OSR1 and STK39/SPAK catalyze phosphorylation of ion cotransporters SLC12A1/NKCC2, SLC12A2/NKCC1, SLC12A5/KCC2 and SLC12A6/KCC3, regulating their activity. Phosphorylation of Na-K-Cl cotransporters SLC12A2/NKCC1 and SLC12A2/NKCC1 promote their activation and ion influx; simultaneously, phosphorylation of K-Cl cotransporters SLC12A5/KCC2 and SLC12A6/KCC3 inhibit their activity, blocking ion efflux. Also acts as a regulator of angiogenesis in endothelial cells. Also acts independently of the WNK1-SPAK/OSR1 kinase cascade by catalyzing phosphorylation of other substrates, such as SYT2, PCF11 and NEDD4L. Mediates phosphorylation of SYT2, regulating SYT2 association with phospholipids and membrane-binding. Regulates mRNA export in the nucleus by mediating phosphorylation of PCF11, thereby decreasing the association between PCF11 and POLR2A/RNA polymerase II and promoting mRNA export to the cytoplasm. Acts as a negative regulator of autophagy. Required for the abscission step during mitosis, independently of the WNK1-SPAK/OSR1 kinase cascade. WNK1 may also play a role in actin cytoskeletal reorganization. Also acts as a scaffold protein independently of its protein kinase activity: negatively regulates cell membrane localization of various transporters and channels, such as SLC4A4, SLC26A6, SLC26A9, TRPV4 and CFTR. Involved in the regulation of epithelial Na(+) channel (ENaC) by promoting activation of SGK1 in a kinase-independent manner: probably acts as a scaffold protein that promotes the recruitment of SGK1 to the mTORC2 complex in response to chloride, leading to mTORC2-dependent phosphorylation and activation of SGK1. Acts as an assembly factor for the ER membrane protein complex independently of its protein kinase activity: associates with EMC2 in the cytoplasm via its amphipathic alpha-helix, and prevents EMC2 ubiquitination and subsequent degradation, thereby promoting EMC2 stabilization. Kinase-defective isoform specifically expressed in kidney, which acts as a dominant-negative regulator of the longer isoform 1. Does not directly inhibit WNK4 and has no direct effect on sodium and chloride ion transport. Down-regulates sodium-chloride cotransporter activity indirectly by inhibiting isoform 1, it associates with isoform 1 and attenuates its kinase activity. In kidney, may play an important role regulating sodium and potassium balance. The sequence is that of Serine/threonine-protein kinase WNK1 from Mus musculus (Mouse).